We begin with the raw amino-acid sequence, 535 residues long: uncharacterized protein (535 aa).

Disordered regions lie at residues 1 to 58, 211 to 254, 313 to 353, 376 to 416, 421 to 440, and 508 to 535; these read MSMK…PRGP, EPPK…PPCI, RRVA…EQVK, RPDK…DQRL, QGLDSGAMDDDTYNPYDAAW, and SLFEHTKEKKRGGDGGDSRGESKRSRRD. Positions 22 to 34 are enriched in basic and acidic residues; the sequence is IRRDPWFGGRDNE. Residues 179 to 342 are SNW; that stretch reads AQYIRYTPSQ…KARQERSAMR (164 aa). The span at 376-393 shows a compositional bias: basic and acidic residues; the sequence is RPDKADKLRKERERDISE. The segment covering 511–535 has biased composition (basic and acidic residues); sequence EHTKEKKRGGDGGDSRGESKRSRRD.

The protein belongs to the SNW family.

This is an uncharacterized protein from Caenorhabditis elegans.